We begin with the raw amino-acid sequence, 154 residues long: 6,7-dimethyl-8-ribityllumazine synthase (154 aa).

Residues Phe21, Ala55–Glu57, and Cys79–Ile81 each bind 5-amino-6-(D-ribitylamino)uracil. Position 84–85 (Ala84–Thr85) interacts with (2S)-2-hydroxy-3-oxobutyl phosphate. His87 (proton donor) is an active-site residue. Phe111 contacts 5-amino-6-(D-ribitylamino)uracil. Residue Arg125 coordinates (2S)-2-hydroxy-3-oxobutyl phosphate.

The protein belongs to the DMRL synthase family. Forms an icosahedral capsid composed of 60 subunits, arranged as a dodecamer of pentamers.

It catalyses the reaction (2S)-2-hydroxy-3-oxobutyl phosphate + 5-amino-6-(D-ribitylamino)uracil = 6,7-dimethyl-8-(1-D-ribityl)lumazine + phosphate + 2 H2O + H(+). It functions in the pathway cofactor biosynthesis; riboflavin biosynthesis; riboflavin from 2-hydroxy-3-oxobutyl phosphate and 5-amino-6-(D-ribitylamino)uracil: step 1/2. In terms of biological role, catalyzes the formation of 6,7-dimethyl-8-ribityllumazine by condensation of 5-amino-6-(D-ribitylamino)uracil with 3,4-dihydroxy-2-butanone 4-phosphate. This is the penultimate step in the biosynthesis of riboflavin. The chain is 6,7-dimethyl-8-ribityllumazine synthase from Macrococcus caseolyticus (strain JCSC5402) (Macrococcoides caseolyticum).